Here is a 296-residue protein sequence, read N- to C-terminus: MGNQKLKWTAEEEEALLAGVRKHGPGKWKNILRDPELAEQLSSRSNIDLKDKWRNLSVAPGIQGSKDKIRTPKIKAAAFHLAAAAAAAIVTPTHSGHSSPVATLPRSGSSDLSIDDSFNIVADPKNAPRYDGMIFEALSNLTDANGSDVSAIFNFIEQRQEVPPNFRRMLSSRLRRLAAQGKLEKVSHLKSTQNFYKMNDNSLVQRTPHVARPKESNTKSRQQTNSQGPSISQQIVEASITAAYKLVEVENKLDVSKGAAEEIERLMKLAEEADEMLVIAREMHEECSQGKIMYLN.

Residues 1–62 enclose the HTH myb-type domain; sequence MGNQKLKWTA…WRNLSVAPGI (62 aa). The H-T-H motif DNA-binding region spans 28-58; the sequence is WKNILRDPELAEQLSSRSNIDLKDKWRNLSV. The H15 domain occupies 126–200; sequence NAPRYDGMIF…STQNFYKMND (75 aa). The segment at 197-232 is disordered; it reads KMNDNSLVQRTPHVARPKESNTKSRQQTNSQGPSIS. Polar residues predominate over residues 219–232; that stretch reads KSRQQTNSQGPSIS. The stretch at 245–282 forms a coiled coil; the sequence is KLVEVENKLDVSKGAAEEIERLMKLAEEADEMLVIARE.

It belongs to the histone H1/H5 family. SMH subfamily.

It localises to the nucleus. The protein resides in the chromosome. Binds preferentially double-stranded telomeric repeats. The polypeptide is Telomere repeat-binding factor 4 (Arabidopsis thaliana (Mouse-ear cress)).